The following is a 179-amino-acid chain: Ribosome-recycling factor (179 aa).

The protein belongs to the RRF family.

Its subcellular location is the cytoplasm. In terms of biological role, responsible for the release of ribosomes from messenger RNA at the termination of protein biosynthesis. May increase the efficiency of translation by recycling ribosomes from one round of translation to another. This Chlamydia trachomatis serovar L2b (strain UCH-1/proctitis) protein is Ribosome-recycling factor.